We begin with the raw amino-acid sequence, 252 residues long: 5'-nucleotidase SurE (252 aa).

A divalent metal cation-binding residues include Asp8, Asp9, Ser39, and Asn95.

The protein belongs to the SurE nucleotidase family. A divalent metal cation is required as a cofactor.

It is found in the cytoplasm. The catalysed reaction is a ribonucleoside 5'-phosphate + H2O = a ribonucleoside + phosphate. Functionally, nucleotidase that shows phosphatase activity on nucleoside 5'-monophosphates. The sequence is that of 5'-nucleotidase SurE from Clostridium botulinum (strain Loch Maree / Type A3).